A 483-amino-acid chain; its full sequence is Regulatory protein ViaA (483 aa).

Belongs to the ViaA family. In terms of assembly, homodimer. Interacts with RavA.

The protein localises to the cytoplasm. Its function is as follows. Component of the RavA-ViaA chaperone complex, which may act on the membrane to optimize the function of some of the respiratory chains. ViaA stimulates the ATPase activity of RavA. This Shigella dysenteriae serotype 1 (strain Sd197) protein is Regulatory protein ViaA.